A 204-amino-acid chain; its full sequence is V-set and transmembrane domain-containing protein 2-like protein (204 aa).

A signal peptide spans 1-24 (MGAPLAVALGALHYLALFLQLGGA). The Ig-like domain maps to 41 to 158 (ALFTETPHDM…DGKARHHKVK (118 aa)). A disulfide bridge links Cys62 with Cys142. Residues 168 to 204 (NSVLHLPEAPPAAPAPPPPKPGKELRKRSVDQEACSL) are disordered. The segment covering 175–187 (EAPPAAPAPPPPK) has biased composition (pro residues). Residues 188 to 198 (PGKELRKRSVD) are compositionally biased toward basic and acidic residues.

The chain is V-set and transmembrane domain-containing protein 2-like protein (VSTM2L) from Homo sapiens (Human).